Here is a 248-residue protein sequence, read N- to C-terminus: Large ribosomal subunit protein bL9m (248 aa).

A mitochondrion-targeting transit peptide spans 1-25 (MLKNIYVTPLNLLKSATSLQQQVRT).

It belongs to the bacterial ribosomal protein bL9 family. As to quaternary structure, component of the mitochondrial ribosome large subunit (39S) which comprises a 16S rRNA and about 50 distinct proteins.

The protein resides in the mitochondrion. In Drosophila melanogaster (Fruit fly), this protein is Large ribosomal subunit protein bL9m (mRpL9).